A 227-amino-acid polypeptide reads, in one-letter code: Venom allergen 5 (227 aa).

Residues 1–23 (MEISGLVYLIIIVTIIDLPYGKA) form the signal peptide. Disulfide bonds link Cys27-Cys40, Cys31-Cys124, Cys49-Cys117, and Cys193-Cys210. Positions 68-212 (LKEHNDFRQK…WHYHYLVCNY (145 aa)) constitute an SCP domain.

This sequence belongs to the CRISP family. Venom allergen 5-like subfamily. Expressed by the venom gland.

It localises to the secreted. This Vespula maculifrons (Eastern yellow jacket) protein is Venom allergen 5.